A 101-amino-acid polypeptide reads, in one-letter code: Small ribosomal subunit protein bS18c (101 aa).

Positions 1–19 (MNKSKRPFTKSKRSFRRRL) are enriched in basic residues. A disordered region spans residues 1 to 23 (MNKSKRPFTKSKRSFRRRLPPIQ).

The protein belongs to the bacterial ribosomal protein bS18 family. In terms of assembly, part of the 30S ribosomal subunit.

It is found in the plastid. The protein localises to the chloroplast. This chain is Small ribosomal subunit protein bS18c, found in Draba nemorosa (Woodland whitlowgrass).